The sequence spans 463 residues: uncharacterized protein (463 aa).

6 helical membrane-spanning segments follow: residues 3 to 23, 88 to 108, 112 to 132, 216 to 236, 245 to 265, and 276 to 296; these read IPPEVHSGLLSAGCGPGSLLV, VAAAAAYCSALAAMPTPAELA, AIHGVLIATNFFGINTVPIAL, FSPAVTVVLALVALQLYDFLW, LLLLPFFTPTLSALTALSALI, and LPIAAALGPGDQWGANLAVAV. Residues 303-322 form a disordered region; that stretch reads VPGGSPPTSNPAPAAPSSNS. The segment covering 306 to 316 has biased composition (pro residues); that stretch reads GSPPTSNPAPA. The next 2 membrane-spanning stretches (helical) occupy residues 323-343 and 419-439; these read VGSASAAPGISYAVPGLAPPG and AGTLGFAGTAPTTSGAAAGMV.

The protein belongs to the mycobacterial PPE family.

It localises to the cell membrane. This is an uncharacterized protein from Mycobacterium tuberculosis (strain CDC 1551 / Oshkosh).